A 160-amino-acid polypeptide reads, in one-letter code: N-acetyltransferase Pat (160 aa).

One can recognise an N-acetyltransferase domain in the interval 5–148 (IKIRKATKED…VYGEMRLTER (144 aa)). Positions 79, 81, 87, 89, 91, 92, 118, 123, and 127 each coordinate CoA.

The protein belongs to the acetyltransferase family. GNAT subfamily.

The catalysed reaction is L-lysyl-[protein] + acetyl-CoA = N(6)-acetyl-L-lysyl-[protein] + CoA + H(+). In terms of biological role, modulates activity of albA1, the major archaeal DNA compaction protein, by decreasing albA1's nucleic acid binding affinity through acetylation of 'Lys-16'. In Saccharolobus solfataricus (strain ATCC 35092 / DSM 1617 / JCM 11322 / P2) (Sulfolobus solfataricus), this protein is N-acetyltransferase Pat.